We begin with the raw amino-acid sequence, 25 residues long: Ranatuerin-1C (25 aa).

A disulfide bridge links Cys-19 with Cys-25.

Expressed by the skin glands.

The protein localises to the secreted. Antibacterial activity against Gram-positive bacterium S.aureus (MIC=55 uM) and Gram-negative bacterium E.coli (MIC=1.5 uM). Has activity against C.albicans (MIC=58 uM). The chain is Ranatuerin-1C from Lithobates clamitans (Green frog).